Consider the following 122-residue polypeptide: UPF0102 protein DIP1513 (122 aa).

Belongs to the UPF0102 family.

The chain is UPF0102 protein DIP1513 from Corynebacterium diphtheriae (strain ATCC 700971 / NCTC 13129 / Biotype gravis).